The sequence spans 610 residues: Elongation factor 4 (610 aa).

One can recognise a tr-type G domain in the interval 11-193; sequence EKIRNFSIIA…QIVEKVPAPS (183 aa). GTP contacts are provided by residues 23–28 and 140–143; these read DHGKST and NKID.

It belongs to the TRAFAC class translation factor GTPase superfamily. Classic translation factor GTPase family. LepA subfamily.

The protein localises to the cell membrane. It carries out the reaction GTP + H2O = GDP + phosphate + H(+). Functionally, required for accurate and efficient protein synthesis under certain stress conditions. May act as a fidelity factor of the translation reaction, by catalyzing a one-codon backward translocation of tRNAs on improperly translocated ribosomes. Back-translocation proceeds from a post-translocation (POST) complex to a pre-translocation (PRE) complex, thus giving elongation factor G a second chance to translocate the tRNAs correctly. Binds to ribosomes in a GTP-dependent manner. This is Elongation factor 4 from Streptococcus uberis (strain ATCC BAA-854 / 0140J).